The chain runs to 350 residues: ATPase GET3 (350 aa).

ATP is bound at residue 26–33 (KGGVGKTT). The active site involves Asp57. ATP contacts are provided by Glu241 and Asn268. Zn(2+)-binding residues include Cys281 and Cys284.

The protein belongs to the arsA ATPase family. In terms of assembly, homodimer. Component of the Golgi to ER traffic (GET) complex, which is composed of GET1, GET2 and GET3. Within the complex, GET1 and GET2 form a heterotetramer which is stabilized by phosphatidylinositol binding and which binds to the GET3 homodimer. Interacts with the chloride channel protein GEF1.

It localises to the cytoplasm. It is found in the endoplasmic reticulum. Its subcellular location is the golgi apparatus. Its function is as follows. ATPase required for the post-translational delivery of tail-anchored (TA) proteins to the endoplasmic reticulum. Recognizes and selectively binds the transmembrane domain of TA proteins in the cytosol. This complex then targets to the endoplasmic reticulum by membrane-bound receptors GET1 and GET2, where the tail-anchored protein is released for insertion. This process is regulated by ATP binding and hydrolysis. ATP binding drives the homodimer towards the closed dimer state, facilitating recognition of newly synthesized TA membrane proteins. ATP hydrolysis is required for insertion. Subsequently, the homodimer reverts towards the open dimer state, lowering its affinity for the GET1-GET2 receptor, and returning it to the cytosol to initiate a new round of targeting. Cooperates with the HDEL receptor ERD2 to mediate the ATP-dependent retrieval of resident ER proteins that contain a C-terminal H-D-E-L retention signal from the Golgi to the ER. Involved in low-level resistance to the oxyanions arsenite and arsenate, and in heat tolerance. The chain is ATPase GET3 from Candida glabrata (strain ATCC 2001 / BCRC 20586 / JCM 3761 / NBRC 0622 / NRRL Y-65 / CBS 138) (Yeast).